We begin with the raw amino-acid sequence, 508 residues long: Photosystem II CP47 reaction center protein (508 aa).

6 helical membrane-spanning segments follow: residues 21-36, 101-115, 140-156, 203-218, 237-252, and 457-472; these read SVHIMHTALVAGWAGS, IVFSGLCFLAAIWHW, GIHLFLSGVACFGFGAF, IAAGTLGILAGLFHLS, VLSSSIAAVFFAAFVV, and SFALLFFFGHIWHGAR.

Belongs to the PsbB/PsbC family. PsbB subfamily. In terms of assembly, PSII is composed of 1 copy each of membrane proteins PsbA, PsbB, PsbC, PsbD, PsbE, PsbF, PsbH, PsbI, PsbJ, PsbK, PsbL, PsbM, PsbT, PsbX, PsbY, PsbZ, Psb30/Ycf12, at least 3 peripheral proteins of the oxygen-evolving complex and a large number of cofactors. It forms dimeric complexes. The cofactor is Binds multiple chlorophylls. PSII binds additional chlorophylls, carotenoids and specific lipids..

It is found in the plastid. Its subcellular location is the chloroplast thylakoid membrane. In terms of biological role, one of the components of the core complex of photosystem II (PSII). It binds chlorophyll and helps catalyze the primary light-induced photochemical processes of PSII. PSII is a light-driven water:plastoquinone oxidoreductase, using light energy to abstract electrons from H(2)O, generating O(2) and a proton gradient subsequently used for ATP formation. This is Photosystem II CP47 reaction center protein from Aethionema cordifolium (Lebanon stonecress).